The following is a 928-amino-acid chain: Retinoblastoma-associated protein (928 aa).

Residues 1-42 (MPPKTPRKTAATAAAAAAEPPAPPPPPPPEEDPEQDSGPEDL) form a disordered region. Pro2 carries the n,N-dimethylproline modification. Over residues 8 to 19 (KTAATAAAAAAE) the composition is skewed to low complexity. Residues 29–39 (PEEDPEQDSGP) are compositionally biased toward acidic residues. Residue Ser37 is modified to Phosphoserine. Ser249 bears the Phosphoserine; by CDK1 mark. Thr252 carries the phosphothreonine; by CDK1 modification. Thr356 carries the phosphothreonine modification. Thr373 bears the Phosphothreonine; by CDK1 mark. The domain A stretch occupies residues 373 to 579 (TPVRTVMNTI…FDLIKQSKDR (207 aa)). A pocket; binds T and E1A region spans residues 373–771 (TPVRTVMNTI…QRLKTNILQY (399 aa)). Phosphoserine; by CDK2 is present on Ser567. Residues 580–639 (EGPTDHLESACPLNLPLQNNHTAADMYLSPVRSPKKKGSTTRVNSTANAETQATSAFQTQ) are spacer. At Ser608 the chain carries Phosphoserine. A disordered region spans residues 610–632 (VRSPKKKGSTTRVNSTANAETQA). A Phosphoserine; by CHEK2 and CHEK1 modification is found at Ser612. Positions 619–632 (TTRVNSTANAETQA) are enriched in polar residues. Residue Ser624 is modified to Phosphoserine. The domain B stretch occupies residues 640 to 771 (KPLKSTSLSL…QRLKTNILQY (132 aa)). The tract at residues 763–928 (RLKTNILQYA…SMDTSNKEEK (166 aa)) is interaction with LIMD1. The segment at 771-928 (YASTRPPTLS…SMDTSNKEEK (158 aa)) is domain C; mediates interaction with E4F1. A phosphoserine mark is found at Ser780, Ser788, and Ser795. Ser807 carries the phosphoserine; by CDK1 and CDK3 modification. Lys810 bears the N6-methyllysine; by SMYD2 mark. Position 811 is a phosphoserine; by CDK1 and CDK3 (Ser811). At Thr821 the chain carries Phosphothreonine; by CDK6. Thr823 is modified (phosphothreonine). Phosphothreonine; by CDK4 is present on Thr826. Residue Thr841 is modified to Phosphothreonine. Ser855 carries the post-translational modification Phosphoserine. Position 860 is an N6-methyllysine; by SMYD2 (Lys860). A Bipartite nuclear localization signal motif is present at residues 860-876 (KRSAEGSNPPKPLKKLR). The disordered stretch occupies residues 860–928 (KRSAEGSNPP…SMDTSNKEEK (69 aa)). Lys873 and Lys874 each carry N6-acetyllysine; by PCAF. Residues 915–928 (KMNDSMDTSNKEEK) show a composition bias toward basic and acidic residues.

This sequence belongs to the retinoblastoma protein (RB) family. In terms of assembly, the hypophosphorylated form interacts with and sequesters the E2F1 transcription factor, thereby inhibiting E2F1 transcription. Interacts with heterodimeric E2F/DP transcription factor complexes containing TFDP1 and either E2F1, E2F3, E2F4 or E2F5, or TFDP2 and E2F4. Interacts (when hyperphosphorylated and hypophosphorylated) with PKP3; the interaction inhibits RB1 interaction with and repression of the transcription factor E2F1, potentially via sequestering RB1 to the cytoplasm. The unphosphorylated form interacts with EID1, ARID3B, KDM5A, SUV39H1, MJD2A/JHDM3A and THOC1. Interacts with the N-terminal domain of TAF1. Interacts with SNW1, ATAD5, AATF, DNMT1, LIN9, LMNA, KMT5B, KMT5C, PELP1, UHRF2 and TMPO-alpha. Interacts with GRIP1 and UBR4. Interacts with ARID4A and KDM5B. Interacts with E4F1 and LIMD1. Interacts with SMARCA4/BRG1 and HDAC1. Interacts with PSMA3 and USP4. Interacts (when methylated at Lys-860) with L3MBTL1. Interacts with CHEK2; phosphorylates RB1. Interacts with CDK1 and CDK2. Interacts with PRMT2. Interacts with CEBPA. P-TEFB complex interacts with RB1; promotes phosphorylation of RB1. Interacts with RBBP9; the interaction disrupts RB1 binding to E2F1. Interacts with KAT2B/PCAF and EP300/P300. Interacts with PAX5. Interacts (phosphorylated and unphosphorylated) with BLCAP. May interact with NDC80. As to quaternary structure, (Microbial infection) Interacts with adenovirus E1A protein. (Microbial infection) Interacts with HPV E7 protein. In terms of assembly, (Microbial infection) Interacts with SV40 large T antigen. As to quaternary structure, (Microbial infection) Interacts with human cytomegalovirus/HHV-5 proteins UL82 and UL123. (Microbial infection) Interacts with molluscum contagiosum virus protein MC007. Phosphorylated by CDK6 and CDK4, and subsequently by CDK2 at Ser-567 in G1, thereby releasing E2F1 which is then able to activate cell growth. Dephosphorylated at the late M phase. SV40 large T antigen, HPV E7 and adenovirus E1A bind to the underphosphorylated, active form of pRb. Phosphorylation at Thr-821 and Thr-826 promotes interaction between the C-terminal domain C and the Pocket domain, and thereby inhibits interactions with heterodimeric E2F/DP transcription factor complexes. Dephosphorylated at Ser-795 by calcineruin upon calcium stimulation. CDK3/cyclin-C-mediated phosphorylation at Ser-807 and Ser-811 is required for G0-G1 transition. Phosphorylated by CDK1 and CDK2 upon TGFB1-mediated apoptosis. Post-translationally, N-terminus is methylated by METTL11A/NTM1. Monomethylation at Lys-810 by SMYD2 enhances phosphorylation at Ser-807 and Ser-811, and promotes cell cycle progression. Monomethylation at Lys-860 by SMYD2 promotes interaction with L3MBTL1. In terms of processing, acetylated during keratinocyte differentiation. Acetylation at Lys-873 and Lys-874 regulates subcellular localization. Can be deacetylated by SIRT1. In terms of tissue distribution, expressed in the retina. Expressed in foreskin keratinocytes (at protein level).

The protein resides in the nucleus. Its subcellular location is the cytoplasm. Functionally, tumor suppressor that is a key regulator of the G1/S transition of the cell cycle. The hypophosphorylated form binds transcription regulators of the E2F family, preventing transcription of E2F-responsive genes. Both physically blocks E2Fs transactivating domain and recruits chromatin-modifying enzymes that actively repress transcription. Cyclin and CDK-dependent phosphorylation of RB1 induces its dissociation from E2Fs, thereby activating transcription of E2F responsive genes and triggering entry into S phase. RB1 also promotes the G0-G1 transition upon phosphorylation and activation by CDK3/cyclin-C. Directly involved in heterochromatin formation by maintaining overall chromatin structure and, in particular, that of constitutive heterochromatin by stabilizing histone methylation. Recruits and targets histone methyltransferases SUV39H1, KMT5B and KMT5C, leading to epigenetic transcriptional repression. Controls histone H4 'Lys-20' trimethylation. Inhibits the intrinsic kinase activity of TAF1. Mediates transcriptional repression by SMARCA4/BRG1 by recruiting a histone deacetylase (HDAC) complex to the c-FOS promoter. In resting neurons, transcription of the c-FOS promoter is inhibited by BRG1-dependent recruitment of a phospho-RB1-HDAC1 repressor complex. Upon calcium influx, RB1 is dephosphorylated by calcineurin, which leads to release of the repressor complex. Its function is as follows. (Microbial infection) In case of viral infections, interactions with SV40 large T antigen, HPV E7 protein or adenovirus E1A protein induce the disassembly of RB1-E2F1 complex thereby disrupting RB1's activity. The polypeptide is Retinoblastoma-associated protein (RB1) (Homo sapiens (Human)).